The chain runs to 511 residues: Histidine ammonia-lyase (511 aa).

Positions 142–144 (ASG) form a cross-link, 5-imidazolinone (Ala-Gly). Ser143 is modified (2,3-didehydroalanine (Ser)).

The protein belongs to the PAL/histidase family. In terms of processing, contains an active site 4-methylidene-imidazol-5-one (MIO), which is formed autocatalytically by cyclization and dehydration of residues Ala-Ser-Gly.

The protein resides in the cytoplasm. It catalyses the reaction L-histidine = trans-urocanate + NH4(+). It functions in the pathway amino-acid degradation; L-histidine degradation into L-glutamate; N-formimidoyl-L-glutamate from L-histidine: step 1/3. The protein is Histidine ammonia-lyase of Chelativorans sp. (strain BNC1).